Here is a 215-residue protein sequence, read N- to C-terminus: 3-isopropylmalate dehydratase small subunit (215 aa).

The protein belongs to the LeuD family. LeuD type 1 subfamily. As to quaternary structure, heterodimer of LeuC and LeuD.

It carries out the reaction (2R,3S)-3-isopropylmalate = (2S)-2-isopropylmalate. It functions in the pathway amino-acid biosynthesis; L-leucine biosynthesis; L-leucine from 3-methyl-2-oxobutanoate: step 2/4. Catalyzes the isomerization between 2-isopropylmalate and 3-isopropylmalate, via the formation of 2-isopropylmaleate. This is 3-isopropylmalate dehydratase small subunit from Stutzerimonas stutzeri (strain A1501) (Pseudomonas stutzeri).